The chain runs to 210 residues: 3-hexulose-6-phosphate synthase 3 (210 aa).

Belongs to the HPS/KGPDC family. HPS subfamily.

The catalysed reaction is D-ribulose 5-phosphate + formaldehyde = D-arabino-hex-3-ulose 6-phosphate. It participates in one-carbon metabolism; formaldehyde assimilation via RuMP pathway; D-fructose 6-phosphate from D-ribulose 5-phosphate and formaldehyde: step 1/2. In terms of biological role, catalyzes the condensation of ribulose 5-phosphate with formaldehyde to form 3-hexulose 6-phosphate. This Staphylococcus saprophyticus subsp. saprophyticus (strain ATCC 15305 / DSM 20229 / NCIMB 8711 / NCTC 7292 / S-41) protein is 3-hexulose-6-phosphate synthase 3.